Consider the following 468-residue polypeptide: Ribulose bisphosphate carboxylase large chain (468 aa).

Lysine 7 is subject to N6,N6,N6-trimethyllysine. The substrate site is built by asparagine 116 and threonine 166. The active-site Proton acceptor is the lysine 168. Lysine 170 provides a ligand contact to substrate. Mg(2+)-binding residues include lysine 194, aspartate 196, and glutamate 197. Lysine 194 bears the N6-carboxylysine mark. Histidine 287 (proton acceptor) is an active-site residue. Positions 288, 320, and 372 each coordinate substrate.

It belongs to the RuBisCO large chain family. Type I subfamily. In terms of assembly, heterohexadecamer of 8 large chains and 8 small chains. Requires Mg(2+) as cofactor.

It localises to the plastid. Its subcellular location is the chloroplast. It catalyses the reaction 2 (2R)-3-phosphoglycerate + 2 H(+) = D-ribulose 1,5-bisphosphate + CO2 + H2O. The enzyme catalyses D-ribulose 1,5-bisphosphate + O2 = 2-phosphoglycolate + (2R)-3-phosphoglycerate + 2 H(+). Functionally, ruBisCO catalyzes two reactions: the carboxylation of D-ribulose 1,5-bisphosphate, the primary event in carbon dioxide fixation, as well as the oxidative fragmentation of the pentose substrate in the photorespiration process. Both reactions occur simultaneously and in competition at the same active site. The chain is Ribulose bisphosphate carboxylase large chain from Couroupita guianensis (Cannonball tree).